A 206-amino-acid chain; its full sequence is Small ribosomal subunit protein uS7 (206 aa).

Residues 1-19 (MSAEDTPEADADAAEESEP) show a composition bias toward acidic residues. Positions 1 to 25 (MSAEDTPEADADAAEESEPETARAK) are disordered. At serine 2 the chain carries N-acetylserine.

This sequence belongs to the universal ribosomal protein uS7 family. As to quaternary structure, part of the 30S ribosomal subunit.

In terms of biological role, one of the primary rRNA binding proteins, it binds directly to 16S rRNA where it nucleates assembly of the head domain of the 30S subunit. Is located at the subunit interface close to the decoding center. In Haloarcula marismortui (strain ATCC 43049 / DSM 3752 / JCM 8966 / VKM B-1809) (Halobacterium marismortui), this protein is Small ribosomal subunit protein uS7.